Consider the following 1085-residue polypeptide: Error-prone DNA polymerase (1085 aa).

It belongs to the DNA polymerase type-C family. DnaE2 subfamily.

The protein resides in the cytoplasm. The catalysed reaction is DNA(n) + a 2'-deoxyribonucleoside 5'-triphosphate = DNA(n+1) + diphosphate. In terms of biological role, DNA polymerase involved in damage-induced mutagenesis and translesion synthesis (TLS). It is not the major replicative DNA polymerase. This chain is Error-prone DNA polymerase, found in Symbiobacterium thermophilum (strain DSM 24528 / JCM 14929 / IAM 14863 / T).